We begin with the raw amino-acid sequence, 128 residues long: uncharacterized protein (128 aa).

This is an uncharacterized protein from Frog virus 3 (isolate Goorha) (FV-3).